A 196-amino-acid polypeptide reads, in one-letter code: Peroxiredoxin TSA1 (196 aa).

The region spanning 3–161 (AQVQKQAPTF…ALRLVEAFQW (159 aa)) is the Thioredoxin domain. A Glycyl lysine isopeptide (Lys-Gly) (interchain with G-Cter in ubiquitin) cross-link involves residue K14. 45-47 (TFV) contacts substrate. C48 functions as the Cysteine sulfenic acid (-SOH) intermediate in the catalytic mechanism. A Glycyl lysine isopeptide (Lys-Gly) (interchain with G-Cter in ubiquitin) cross-link involves residue K89. R124 serves as a coordination point for substrate. A Glycyl lysine isopeptide (Lys-Gly) (interchain with G-Cter in ubiquitin) cross-link involves residue K132. T174 carries the post-translational modification Phosphothreonine.

This sequence belongs to the peroxiredoxin family. AhpC/Prx1 subfamily. Homodimer; disulfide-linked, upon oxidation. Interacts with YAP1 via transient disulfide linkages. The enzyme can be inactivated by further oxidation of the cysteine sulfenic acid (C(P)-SOH) to sulphinic acid (C(P)-SO2H) instead of its condensation to a disulfide bond. It can be reactivated by forming a transient disulfide bond with sulfiredoxin SRX1, which reduces the cysteine sulfinic acid in an ATP- and Mg-dependent manner.

Its subcellular location is the cytoplasm. The enzyme catalyses a hydroperoxide + [thioredoxin]-dithiol = an alcohol + [thioredoxin]-disulfide + H2O. Its function is as follows. Thiol-specific peroxidase that catalyzes the reduction of hydrogen peroxide and organic hydroperoxides to water and alcohols, respectively. Plays a role in cell protection against oxidative stress by detoxifying peroxides and as sensor of hydrogen peroxide-mediated signaling events. Protects the cell against the oxidative stress caused by nascent-protein misfolding and aggregation. Relays hydrogen peroxide as a signal to the transcription factor YAP1 by inducing the formation of intramolecular disulfide bonds in YAP1, which causes its nuclear accumulation and activation. Can act alternatively as peroxidase and molecular chaperone. Oxidative stress and heat shock exposure cause a reversible shift of the protein structure from low MW species to high MW complexes, triggering a peroxidase-to-chaperone functional switch. The chaperone function of the protein enhances resistance to heat shock. The sequence is that of Peroxiredoxin TSA1 from Saccharomyces cerevisiae (strain ATCC 204508 / S288c) (Baker's yeast).